The sequence spans 305 residues: Glycine--tRNA ligase alpha subunit (305 aa).

Belongs to the class-II aminoacyl-tRNA synthetase family. Tetramer of two alpha and two beta subunits.

It is found in the cytoplasm. The enzyme catalyses tRNA(Gly) + glycine + ATP = glycyl-tRNA(Gly) + AMP + diphosphate. The chain is Glycine--tRNA ligase alpha subunit from Streptococcus pneumoniae serotype 19F (strain G54).